We begin with the raw amino-acid sequence, 340 residues long: MIFIDACFKKPTPYTPIWMMRQAGRYLPEYMEVRKQAGDFLSLCKDYKKASEVSLQPIDILDVDAAIIFSDILVVPLEMGMNLRFEKGEGPVFDNPISTLEDLEKLDDQNAHKKLNYVYDALKLTREKLSQNKALIGFCGSPWTIATYMIEGSGSKNYAKCKKMLYQNPELLHKILNKLTQVLKLYLEEQIKAGANAIQIFDSWASALEYDKFFEFSFNYMLEISNFIKSKYPNIPVILFPKGISGYLDRIDGNFDVFGVDWSTPLDLARDKLSHKYTLQGNMEPCRLYDKNAIKEGVEKILKTMQNKAHIFNLGHGILPDIPVENAKYFIKLVQESSAK.

Substrate-binding positions include 21 to 25 (RQAGR), aspartate 71, tyrosine 148, serine 203, and histidine 316.

The protein belongs to the uroporphyrinogen decarboxylase family. Homodimer.

It localises to the cytoplasm. The enzyme catalyses uroporphyrinogen III + 4 H(+) = coproporphyrinogen III + 4 CO2. It participates in porphyrin-containing compound metabolism; protoporphyrin-IX biosynthesis; coproporphyrinogen-III from 5-aminolevulinate: step 4/4. Its function is as follows. Catalyzes the decarboxylation of four acetate groups of uroporphyrinogen-III to yield coproporphyrinogen-III. This Campylobacter jejuni subsp. jejuni serotype O:6 (strain 81116 / NCTC 11828) protein is Uroporphyrinogen decarboxylase.